The following is a 212-amino-acid chain: 2',3'-cyclic-nucleotide 3'-phosphodiesterase (212 aa).

The active-site Proton donor/acceptor is the H51. T53 lines the substrate pocket. H146 acts as the Proton donor/acceptor in catalysis. S148 and Y151 together coordinate substrate.

It belongs to the 2H phosphoesterase superfamily. CPD1 family.

It is found in the golgi apparatus. The catalysed reaction is a nucleoside 2',3'-cyclic phosphate + H2O = a nucleoside 2'-phosphate + H(+). Its function is as follows. Involved in the metabolism of ADP-ribose 1',2'-cyclic phosphate which is produced as a consequence of tRNA splicing. This Neurospora crassa (strain ATCC 24698 / 74-OR23-1A / CBS 708.71 / DSM 1257 / FGSC 987) protein is 2',3'-cyclic-nucleotide 3'-phosphodiesterase (cpd-7).